A 297-amino-acid polypeptide reads, in one-letter code: Bifunctional protein FolD 2 (297 aa).

Residues 172-174 (GRG), Thr-199, and Val-240 contribute to the NADP(+) site.

The protein belongs to the tetrahydrofolate dehydrogenase/cyclohydrolase family. In terms of assembly, homodimer.

It carries out the reaction (6R)-5,10-methylene-5,6,7,8-tetrahydrofolate + NADP(+) = (6R)-5,10-methenyltetrahydrofolate + NADPH. The enzyme catalyses (6R)-5,10-methenyltetrahydrofolate + H2O = (6R)-10-formyltetrahydrofolate + H(+). It functions in the pathway one-carbon metabolism; tetrahydrofolate interconversion. Functionally, catalyzes the oxidation of 5,10-methylenetetrahydrofolate to 5,10-methenyltetrahydrofolate and then the hydrolysis of 5,10-methenyltetrahydrofolate to 10-formyltetrahydrofolate. This Paenarthrobacter aurescens (strain TC1) protein is Bifunctional protein FolD 2.